The sequence spans 443 residues: Thymidine phosphorylase (443 aa).

Belongs to the thymidine/pyrimidine-nucleoside phosphorylase family. Homodimer.

It carries out the reaction thymidine + phosphate = 2-deoxy-alpha-D-ribose 1-phosphate + thymine. The protein operates within pyrimidine metabolism; dTMP biosynthesis via salvage pathway; dTMP from thymine: step 1/2. Its function is as follows. The enzymes which catalyze the reversible phosphorolysis of pyrimidine nucleosides are involved in the degradation of these compounds and in their utilization as carbon and energy sources, or in the rescue of pyrimidine bases for nucleotide synthesis. In Shewanella baltica (strain OS195), this protein is Thymidine phosphorylase.